The chain runs to 442 residues: Glutamyl-tRNA reductase (442 aa).

Residues 49 to 52 (TCNR), Ser109, 114 to 116 (EGQ), and Gln120 each bind substrate. Cys50 functions as the Nucleophile in the catalytic mechanism. 198-203 (GAGRMA) provides a ligand contact to NADP(+). Positions 420–442 (MAAAQRLFDLPGDDADRDRSDAK) are disordered. The span at 433 to 442 (DADRDRSDAK) shows a compositional bias: basic and acidic residues.

Belongs to the glutamyl-tRNA reductase family. As to quaternary structure, homodimer.

The enzyme catalyses (S)-4-amino-5-oxopentanoate + tRNA(Glu) + NADP(+) = L-glutamyl-tRNA(Glu) + NADPH + H(+). The protein operates within porphyrin-containing compound metabolism; protoporphyrin-IX biosynthesis; 5-aminolevulinate from L-glutamyl-tRNA(Glu): step 1/2. It participates in porphyrin-containing compound metabolism; chlorophyll biosynthesis. Its function is as follows. Catalyzes the NADPH-dependent reduction of glutamyl-tRNA(Glu) to glutamate 1-semialdehyde (GSA). In Synechococcus sp. (strain RCC307), this protein is Glutamyl-tRNA reductase.